The following is a 400-amino-acid chain: Na(+)/H(+) antiporter NhaA (400 aa).

The next 12 helical transmembrane spans lie at 18–38 (LATE…AIII), 68–88 (VHMW…GLEI), 105–125 (LPAL…LAVS), 133–153 (GGWA…LALL), 163–183 (VMLV…IAVF), 186–206 (SSIN…LLAF), 211–231 (VVAL…TLLS), 232–252 (GVHA…SAGS), 267–287 (GLAP…NAGV), 305–325 (IALG…LLAV), 338–358 (WLQI…SLFI), and 372–392 (AAKI…CVIL).

The protein belongs to the NhaA Na(+)/H(+) (TC 2.A.33) antiporter family.

It is found in the cell inner membrane. The catalysed reaction is Na(+)(in) + 2 H(+)(out) = Na(+)(out) + 2 H(+)(in). Na(+)/H(+) antiporter that extrudes sodium in exchange for external protons. The chain is Na(+)/H(+) antiporter NhaA from Pseudomonas entomophila (strain L48).